Consider the following 343-residue polypeptide: Sodium/bile acid cotransporter 7-A (343 aa).

Residues 1 to 10 are Cytoplasmic-facing; the sequence is MGLLERLRKE. Residues 11–31 traverse the membrane as a helical segment; that stretch reads WFIVGIILVIAAAKLEPTVGV. Residues 32-37 lie on the Extracellular side of the membrane; that stretch reads KGGPLK. The chain crosses the membrane as a helical span at residues 38 to 58; it reads PEITITYIAVSAIFFNSGLSL. At 59–71 the chain is on the cytoplasmic side; that stretch reads KTEELTNALMHVK. Residues 72-92 traverse the membrane as a helical segment; sequence LHLFVQLFTLVFFPTAIWLFL. Over 93-116 the chain is Extracellular; the sequence is QVLSLTPINEWLLKGLQTVSCMPP. The chain crosses the membrane as a helical span at residues 117 to 137; the sequence is PVSSAVILTKAVGGNEAAAIF. A topological domain (cytoplasmic) is located at residue asparagine 138. The chain crosses the membrane as a helical span at residues 139-159; that stretch reads SAFGSFLGIVVTPLLLLLFLG. The Extracellular segment spans residues 160–163; sequence SSSS. The helical transmembrane segment at 164-184 threads the bilayer; that stretch reads VPFTSIFSQLFMTVVVPLIIG. Over 185-201 the chain is Cytoplasmic; sequence QIVRRYIKDWLERKKPP. A helical transmembrane segment spans residues 202-222; the sequence is FGAISSCVLLMIIYTTFCDTF. The Extracellular segment spans residues 223–234; it reads SNPNIDLDTFSL. The chain crosses the membrane as a helical span at residues 235 to 255; sequence VVIVFIIFFIQLAFMLLTFLF. Over 256–270 the chain is Cytoplasmic; that stretch reads STSKNSGFTPADTVA. Residues 271 to 291 form a helical membrane-spanning segment; that stretch reads IVFCSTHKSLTLGIPMLKIVF. The Extracellular segment spans residues 292 to 298; it reads VGYEHLS. Residues 299–319 traverse the membrane as a helical segment; sequence LISVPLLIYHPAQILLGSVLV. Residues 320–343 are Cytoplasmic-facing; the sequence is PTIKSWMLSRQKALKLTRQPKIPL.

Belongs to the bile acid:sodium symporter (BASS) (TC 2.A.28) family. As to expression, strongly expressed in small intestine. Moderately expressed in spleen. Weakly expressed in skeletal muscle. Not detected in other tissues tested.

It localises to the cell membrane. The protein resides in the endoplasmic reticulum membrane. It is found in the golgi apparatus membrane. In terms of biological role, involved in teeth and skeletal development. Has an essential role in the biosynthesis and trafficking of glycosaminoglycans and glycoproteins to produce a proper functioning extracellular matrix. Required for extracellular matrix mineralization. Also involved in the regulation of cellular calcium homeostasis. Does not show transport activity towards bile acids or steroid sulfates. The sequence is that of Sodium/bile acid cotransporter 7-A (slc10a7-a) from Xenopus laevis (African clawed frog).